We begin with the raw amino-acid sequence, 389 residues long: MRAIIIVLDSAGIGEMPDAEKYGDKGSNTFGNTAKAVGGLHMPNSQRLGLGNLTDILGVPPTDHALGAYGRMLEKSPGKDTTTGHWEFMGIILEKPFDMFPNGFPPEIIEPFEKETGRKVIGNKPASGTEIIKELGREHEKTGALIVYTSADSVFQIAAHEEIVPVPELYKYCEIARKILNESGYKVARVIARPFIGEWPNYTRTPRRHDYSLPPEGKIALEYLVENGVPVYAVGKINDIYDGHGITEYVKTKDNMDGVDKTLDYIRKVDKGLIFTNLVDFDMKYGHRNNPEGYAKALEEFDARLPEIIGTMRPDDVLFITADHGCDPTTPSTDHSREKVPLLVYGRHVKENVFLGERETFADLGQTILDLFGVEPMENGTSFKKEILD.

6 residues coordinate Mn(2+): Asp9, Asp282, His287, Asp323, His324, and His335.

This sequence belongs to the phosphopentomutase family. Mn(2+) serves as cofactor.

The protein resides in the cytoplasm. It catalyses the reaction 2-deoxy-alpha-D-ribose 1-phosphate = 2-deoxy-D-ribose 5-phosphate. The catalysed reaction is alpha-D-ribose 1-phosphate = D-ribose 5-phosphate. It functions in the pathway carbohydrate degradation; 2-deoxy-D-ribose 1-phosphate degradation; D-glyceraldehyde 3-phosphate and acetaldehyde from 2-deoxy-alpha-D-ribose 1-phosphate: step 1/2. Functionally, isomerase that catalyzes the conversion of deoxy-ribose 1-phosphate (dRib-1-P) and ribose 1-phosphate (Rib-1-P) to deoxy-ribose 5-phosphate (dRib-5-P) and ribose 5-phosphate (Rib-5-P), respectively. In Kosmotoga olearia (strain ATCC BAA-1733 / DSM 21960 / TBF 19.5.1), this protein is Phosphopentomutase.